Consider the following 1347-residue polypeptide: DExH-box ATP-dependent RNA helicase DExH11 (1347 aa).

The disordered stretch occupies residues 263-291 (ELEGDDHTAGSESPKAEAEPDAKASISNE). Residues 267-284 (DDHTAGSESPKAEAEPDA) are compositionally biased toward basic and acidic residues. A Helicase ATP-binding domain is found at 369-524 (ICCLEKGESV…WIGRTKQKEI (156 aa)). 382 to 389 (AHTSAGKT) contacts ATP. A DEVH box motif is present at residues 472–475 (DEVH). The disordered stretch occupies residues 566-625 (SQKKKNSNAVSVAPKQQMGSSAHQDGSKSQKHEAHSRGKQNKHSSVKDVGKSSYSGNSQN). Residues 590–601 (DGSKSQKHEAHS) show a composition bias toward basic and acidic residues. The Helicase C-terminal domain occupies 673-838 (DLTSSSEKSE…LTYIMILHLL (166 aa)).

Belongs to the DExH box helicase family. SKI2 subfamily. As to quaternary structure, component of the cytoplasmic SKI complex, which consists of SKI2, SKI3 and VIP3/SKI8. As to expression, expressed in vascular tissues of leaves and roots of young plants.

The protein resides in the cytoplasm. The enzyme catalyses ATP + H2O = ADP + phosphate + H(+). Component of the SKI complex which is thought to be involved in exosome-mediated RNA decay and associates with transcriptionally active genes in a manner dependent on PAF1 complex (PAF1C). Involved in the regulation of potassium deprivation stress response. The protein is DExH-box ATP-dependent RNA helicase DExH11 of Arabidopsis thaliana (Mouse-ear cress).